The following is a 504-amino-acid chain: Aspartyl/glutamyl-tRNA(Asn/Gln) amidotransferase subunit B (504 aa).

This sequence belongs to the GatB/GatE family. GatB subfamily. Heterotrimer of A, B and C subunits.

It catalyses the reaction L-glutamyl-tRNA(Gln) + L-glutamine + ATP + H2O = L-glutaminyl-tRNA(Gln) + L-glutamate + ADP + phosphate + H(+). It carries out the reaction L-aspartyl-tRNA(Asn) + L-glutamine + ATP + H2O = L-asparaginyl-tRNA(Asn) + L-glutamate + ADP + phosphate + 2 H(+). Its function is as follows. Allows the formation of correctly charged Asn-tRNA(Asn) or Gln-tRNA(Gln) through the transamidation of misacylated Asp-tRNA(Asn) or Glu-tRNA(Gln) in organisms which lack either or both of asparaginyl-tRNA or glutaminyl-tRNA synthetases. The reaction takes place in the presence of glutamine and ATP through an activated phospho-Asp-tRNA(Asn) or phospho-Glu-tRNA(Gln). This chain is Aspartyl/glutamyl-tRNA(Asn/Gln) amidotransferase subunit B, found in Tropheryma whipplei (strain Twist) (Whipple's bacillus).